We begin with the raw amino-acid sequence, 115 residues long: uncharacterized protein (115 aa).

The region spanning 1-91 is the HTH arsR-type domain; sequence MTEYNANSIR…SELEGFKNVS (91 aa). Residues 30-53 constitute a DNA-binding region (H-T-H motif); it reads ASLISHTLLLSYATVLRHLRILND.

In terms of biological role, essential for virus function. This is an uncharacterized protein from Saccharolobus solfataricus (Sulfolobus solfataricus).